Consider the following 177-residue polypeptide: uncharacterized protein (177 aa).

The first 22 residues, 1–22 (MCGVVVVIVALVPADPLLPAFA), serve as a signal peptide directing secretion. 3 helical membrane passes run 31 to 51 (VFIP…TCVF), 94 to 114 (ISLM…LKFV), and 136 to 156 (LFPI…LLEI).

Its subcellular location is the membrane. This is an uncharacterized protein from Saccharomyces cerevisiae (strain ATCC 204508 / S288c) (Baker's yeast).